The following is a 189-amino-acid chain: Ras-like protein 1 (189 aa).

10-17 serves as a coordination point for GTP; sequence GAGGVGKS. The Effector region motif lies at 32–40; sequence YDPTIEDSY. GTP is bound by residues 57 to 61 and 116 to 119; these read DTAGQ and NKCD. A Cysteine methyl ester modification is found at cysteine 186. Cysteine 186 carries S-geranylgeranyl cysteine lipidation. A propeptide spans 187–189 (removed in mature form); that stretch reads KML.

This sequence belongs to the small GTPase superfamily. Ras family.

The protein resides in the cell membrane. It catalyses the reaction GTP + H2O = GDP + phosphate + H(+). Alternates between an inactive form bound to GDP and an active form bound to GTP. Activated by a guanine nucleotide-exchange factor (GEF) and inactivated by a GTPase-activating protein (GAP). Its function is as follows. Ras proteins bind GDP/GTP and possess intrinsic GTPase activity. Plays a role in eye development by regulating cell growth, survival of postmitotic ommatidial cells and differentiation of photoreceptor cells. During larval development, mediates Ptth/tor signaling leading to the production of ecdysone, a hormone required for the initiation of metamorphosis. In Drosophila ananassae (Fruit fly), this protein is Ras-like protein 1.